Reading from the N-terminus, the 173-residue chain is Transcription factor E (173 aa).

One can recognise an HTH TFE/IIEalpha-type domain in the interval 3 to 86 (DDPLVKSLLT…SWKFEEQEVI (84 aa)).

The protein belongs to the TFE family. As to quaternary structure, monomer. Interaction with RNA polymerase subunits RpoF and RpoE is necessary for Tfe stimulatory transcription activity. Able to interact with Tbp and RNA polymerase in the absence of DNA promoter. Interacts both with the preinitiation and elongation complexes.

In terms of biological role, transcription factor that plays a role in the activation of archaeal genes transcribed by RNA polymerase. Facilitates transcription initiation by enhancing TATA-box recognition by TATA-box-binding protein (Tbp), and transcription factor B (Tfb) and RNA polymerase recruitment. Not absolutely required for transcription in vitro, but particularly important in cases where Tbp or Tfb function is not optimal. It dynamically alters the nucleic acid-binding properties of RNA polymerases by stabilizing the initiation complex and destabilizing elongation complexes. Seems to translocate with the RNA polymerase following initiation and acts by binding to the non template strand of the transcription bubble in elongation complexes. This chain is Transcription factor E, found in Methanobrevibacter smithii (strain ATCC 35061 / DSM 861 / OCM 144 / PS).